The primary structure comprises 164 residues: UPF0225 protein Shewana3_2159 (164 aa).

Belongs to the UPF0225 family.

This is UPF0225 protein Shewana3_2159 from Shewanella sp. (strain ANA-3).